The following is a 201-amino-acid chain: MAVAIEAPFHVLAVDDSLPDRKLIERLLKTSSFQVTTVDSGSKALEFLGLHDHEDSPISTQSDQQEVGVNLIITDYCMPGMTGYDLLKKIKESSYLRDIPVVIMSSDNIPSRINRCLEEGADEFFLKPVRLSDMSKLKPHILKSRCKEHYQQEQHLQSNSESNNSSNPTSENSSSSTSTNSHKRKAVDEEILPHTIRPRHS.

The Response regulatory domain maps to 10-142 (HVLAVDDSLP…DMSKLKPHIL (133 aa)). Asp75 carries the post-translational modification 4-aspartylphosphate. The interval 149–201 (HYQQEQHLQSNSESNNSSNPTSENSSSSTSTNSHKRKAVDEEILPHTIRPRHS) is disordered. Over residues 158–180 (SNSESNNSSNPTSENSSSSTSTN) the composition is skewed to low complexity.

It belongs to the ARR family. Type-A subfamily. Post-translationally, two-component system major event consists of a His-to-Asp phosphorelay between a sensor histidine kinase (HK) and a response regulator (RR). In plants, the His-to-Asp phosphorelay involves an additional intermediate named Histidine-containing phosphotransfer protein (HPt). This multistep phosphorelay consists of a His-Asp-His-Asp sequential transfer of a phosphate group between first a His and an Asp of the HK protein, followed by the transfer to a conserved His of the HPt protein and finally the transfer to an Asp in the receiver domain of the RR protein. Expressed in mature leaves, and at low levels in roots, shoots and flowers.

In terms of biological role, functions as a response regulator involved in His-to-Asp phosphorelay signal transduction system. Phosphorylation of the Asp residue in the receiver domain activates the ability of the protein to promote the transcription of target genes. Type-A response regulators seem to act as negative regulators of the cytokinin signaling. This is Two-component response regulator ORR10 from Oryza sativa subsp. indica (Rice).